The chain runs to 323 residues: CIMIP2 protein CG18335 (323 aa).

It belongs to the CIMIP2 family.

Its subcellular location is the cytoplasm. It is found in the cytoskeleton. The protein resides in the cilium axoneme. Its function is as follows. Probable microtubule inner protein (MIP) part of the dynein-decorated doublet microtubules (DMTs) in cilium axoneme. This chain is CIMIP2 protein CG18335, found in Drosophila melanogaster (Fruit fly).